A 189-amino-acid polypeptide reads, in one-letter code: Copper transport protein CTR2 (189 aa).

Topologically, residues 1-81 are cytoplasmic; that stretch reads MDDKKTWSTV…VVFEWWHIKT (81 aa). Residues 82 to 102 traverse the membrane as a helical segment; sequence LPGLILSCLAIFGLAYLYEYL. Over 103–142 the chain is Vacuolar; sequence KYCVHKRQLSQRVLLPNRSLTKINQADKVSNSILYGLQVG. Residues 143–163 form a helical membrane-spanning segment; the sequence is FSFMLMLVFMTYNGWLMLAVV. The Cytoplasmic portion of the chain corresponds to 164–189; the sequence is CGAIWGNYSWCTSYSPEIDDSSLACH.

It belongs to the copper transporter (Ctr) (TC 1.A.56) family. SLC31A subfamily. In terms of assembly, homomultimer.

Its subcellular location is the vacuole membrane. In terms of biological role, provides bioavailable copper via mobilization of vacuolar copper stores and export to the cytoplasm. The polypeptide is Copper transport protein CTR2 (CTR2) (Saccharomyces cerevisiae (strain ATCC 204508 / S288c) (Baker's yeast)).